A 126-amino-acid polypeptide reads, in one-letter code: UPF0047 protein AF_2050 (126 aa).

Belongs to the UPF0047 family.

This chain is UPF0047 protein AF_2050, found in Archaeoglobus fulgidus (strain ATCC 49558 / DSM 4304 / JCM 9628 / NBRC 100126 / VC-16).